A 260-amino-acid chain; its full sequence is MNHVVLSGRNISMKYGHRLVLDDISIDIRAGEVTALLGPNGAGKSTLLKLLCGEVPSHNEIDYFGEPKEAWKPEEIAKHLAMLPQHSTLTFPFLAREVVELGAIPLSLSNKETTELALHYMQKTDVLHLAESLYPALSGGEKQRLHLARVLTQLHQSGDKKILMLDEPTSALDLAHQHNTLKIAREAAKAQNAAVVVVLHDLNLASQYADRLVLLHNGKLVCDDNPWQALTPERIEQVYGYRSIVTKHPTLDFPQVHAAA.

The 237-residue stretch at 6–242 folds into the ABC transporter domain; that stretch reads LSGRNISMKY…ERIEQVYGYR (237 aa). ATP is bound at residue 38–45; sequence GPNGAGKS.

The protein belongs to the ABC transporter superfamily. Heme (hemin) importer (TC 3.A.1.14.5) family. As to quaternary structure, the complex is composed of two ATP-binding proteins (HmuV), two transmembrane proteins (HmuU) and a solute-binding protein (HmuT).

It localises to the cell inner membrane. Its function is as follows. Part of the ABC transporter complex HmuTUV involved in hemin import. Responsible for energy coupling to the transport system. The chain is Hemin import ATP-binding protein HmuV from Vibrio parahaemolyticus serotype O3:K6 (strain RIMD 2210633).